The following is a 161-amino-acid chain: Nucleoside diphosphate kinase (161 aa).

Lys12, Phe60, Arg88, Thr94, and Arg105 together coordinate ATP. His121 (pros-phosphohistidine intermediate) is an active-site residue.

The protein belongs to the NDK family. The cofactor is Mg(2+).

The protein localises to the cytoplasm. The catalysed reaction is a 2'-deoxyribonucleoside 5'-diphosphate + ATP = a 2'-deoxyribonucleoside 5'-triphosphate + ADP. It catalyses the reaction a ribonucleoside 5'-diphosphate + ATP = a ribonucleoside 5'-triphosphate + ADP. Major role in the synthesis of nucleoside triphosphates other than ATP. The ATP gamma phosphate is transferred to the NDP beta phosphate via a ping-pong mechanism, using a phosphorylated active-site intermediate. The chain is Nucleoside diphosphate kinase from Pyrococcus furiosus (strain ATCC 43587 / DSM 3638 / JCM 8422 / Vc1).